The sequence spans 361 residues: 24-methylenesterol C-methyltransferase 2 (361 aa).

The protein belongs to the class I-like SAM-binding methyltransferase superfamily. Erg6/SMT family.

It carries out the reaction 24-methylidenelophenol + S-adenosyl-L-methionine = (Z)-24-ethylidenelophenol + S-adenosyl-L-homocysteine + H(+). Its pathway is steroid biosynthesis; sterol biosynthesis. Catalyzes the methyl transfer from S-adenosyl-methionine to the methylene group of 24-methylene lophenol to form 24-ethylidene lophenol. This is 24-methylenesterol C-methyltransferase 2 (SMT2) from Arabidopsis thaliana (Mouse-ear cress).